We begin with the raw amino-acid sequence, 144 residues long: Large ribosomal subunit protein uL15 (144 aa).

The segment at 1–53 (MFLNTIKPGEGAKHAKRRVGRGIGSGLGKTAGRGHKGQKSRSGGFHKVGFEGG) is disordered. The segment covering 21–31 (RGIGSGLGKTA) has biased composition (gly residues).

Belongs to the universal ribosomal protein uL15 family. As to quaternary structure, part of the 50S ribosomal subunit.

Functionally, binds to the 23S rRNA. This chain is Large ribosomal subunit protein uL15, found in Laribacter hongkongensis (strain HLHK9).